Reading from the N-terminus, the 250-residue chain is Dihydroorotate dehydrogenase B (NAD(+)), electron transfer subunit (250 aa).

The FAD-binding FR-type domain maps to 1 to 94; sequence MKVVAQEEIA…MGPQGNGFDL (94 aa). Residues 45–48, 62–64, and 69–70 contribute to the FAD site; these read RPIS, IYR, and GT. [2Fe-2S] cluster-binding residues include cysteine 214, cysteine 219, cysteine 222, and cysteine 237.

It belongs to the PyrK family. In terms of assembly, heterotetramer of 2 PyrK and 2 PyrD type B subunits. [2Fe-2S] cluster serves as cofactor. FAD is required as a cofactor.

The protein operates within pyrimidine metabolism; UMP biosynthesis via de novo pathway; orotate from (S)-dihydroorotate (NAD(+) route): step 1/1. Responsible for channeling the electrons from the oxidation of dihydroorotate from the FMN redox center in the PyrD type B subunit to the ultimate electron acceptor NAD(+). The sequence is that of Dihydroorotate dehydrogenase B (NAD(+)), electron transfer subunit from Streptococcus pneumoniae serotype 4 (strain ATCC BAA-334 / TIGR4).